We begin with the raw amino-acid sequence, 635 residues long: tRNA uridine 5-carboxymethylaminomethyl modification enzyme MnmG (635 aa).

15–20 (GAGHAG) contributes to the FAD binding site. An NAD(+)-binding site is contributed by 276–290 (GPRYCPSIEDKIVRF).

Belongs to the MnmG family. In terms of assembly, homodimer. Heterotetramer of two MnmE and two MnmG subunits. It depends on FAD as a cofactor.

The protein localises to the cytoplasm. NAD-binding protein involved in the addition of a carboxymethylaminomethyl (cmnm) group at the wobble position (U34) of certain tRNAs, forming tRNA-cmnm(5)s(2)U34. This is tRNA uridine 5-carboxymethylaminomethyl modification enzyme MnmG from Streptococcus sanguinis (strain SK36).